Consider the following 307-residue polypeptide: Phosphoribosylaminoimidazole-succinocarboxamide synthase (307 aa).

It belongs to the SAICAR synthetase family.

It catalyses the reaction 5-amino-1-(5-phospho-D-ribosyl)imidazole-4-carboxylate + L-aspartate + ATP = (2S)-2-[5-amino-1-(5-phospho-beta-D-ribosyl)imidazole-4-carboxamido]succinate + ADP + phosphate + 2 H(+). It participates in purine metabolism; IMP biosynthesis via de novo pathway; 5-amino-1-(5-phospho-D-ribosyl)imidazole-4-carboxamide from 5-amino-1-(5-phospho-D-ribosyl)imidazole-4-carboxylate: step 1/2. This is Phosphoribosylaminoimidazole-succinocarboxamide synthase from Thermobifida fusca (strain YX).